A 409-amino-acid polypeptide reads, in one-letter code: UDP-N-acetylglucosamine--N-acetylmuramyl-(pentapeptide) pyrophosphoryl-undecaprenol N-acetylglucosamine transferase (409 aa).

Residues 11 to 13 (TGG), asparagine 125, arginine 169, serine 199, and glutamine 299 each bind UDP-N-acetyl-alpha-D-glucosamine.

It belongs to the glycosyltransferase 28 family. MurG subfamily.

The protein localises to the cell membrane. It catalyses the reaction di-trans,octa-cis-undecaprenyl diphospho-N-acetyl-alpha-D-muramoyl-L-alanyl-D-glutamyl-meso-2,6-diaminopimeloyl-D-alanyl-D-alanine + UDP-N-acetyl-alpha-D-glucosamine = di-trans,octa-cis-undecaprenyl diphospho-[N-acetyl-alpha-D-glucosaminyl-(1-&gt;4)]-N-acetyl-alpha-D-muramoyl-L-alanyl-D-glutamyl-meso-2,6-diaminopimeloyl-D-alanyl-D-alanine + UDP + H(+). It participates in cell wall biogenesis; peptidoglycan biosynthesis. Cell wall formation. Catalyzes the transfer of a GlcNAc subunit on undecaprenyl-pyrophosphoryl-MurNAc-pentapeptide (lipid intermediate I) to form undecaprenyl-pyrophosphoryl-MurNAc-(pentapeptide)GlcNAc (lipid intermediate II). In Clostridioides difficile (strain 630) (Peptoclostridium difficile), this protein is UDP-N-acetylglucosamine--N-acetylmuramyl-(pentapeptide) pyrophosphoryl-undecaprenol N-acetylglucosamine transferase.